The following is a 98-amino-acid chain: MEPAAPTVQPRAQPPPPDVWPPVGSEEEFYDCPDYYYLRDFPACGAGRINGRTRRERELRTNWLVPGGHERKIAQKLLNSQRKRRQRQLQPRPRTRLT.

Low complexity predominate over residues 1-11 (MEPAAPTVQPR). Disordered stretches follow at residues 1 to 24 (MEPA…PPVG) and 78 to 98 (LNSQ…TRLT). Residues 81–98 (QRKRRQRQLQPRPRTRLT) are compositionally biased toward basic residues.

It belongs to the NUPR family.

The protein resides in the nucleus. In terms of biological role, acts as a transcriptional repressor by inhibiting gene expression at the NUPR1 promoter in a p53/TP53-dependent manner in cancer cells. Involved in the G1 cell cycle arrest, and in a decrease in cell viability and cell proliferation. Plays a role as a negative regulator of the protumoral factor NUPR1. The polypeptide is Nuclear protein 2 (Bos taurus (Bovine)).